The sequence spans 233 residues: Hydroxyacylglutathione hydrolase (233 aa).

Zn(2+) is bound by residues H52, H54, D56, H57, H108, D125, and H163.

The protein belongs to the metallo-beta-lactamase superfamily. Glyoxalase II family. In terms of assembly, monomer. It depends on Zn(2+) as a cofactor.

It catalyses the reaction an S-(2-hydroxyacyl)glutathione + H2O = a 2-hydroxy carboxylate + glutathione + H(+). It participates in secondary metabolite metabolism; methylglyoxal degradation; (R)-lactate from methylglyoxal: step 2/2. Thiolesterase that catalyzes the hydrolysis of S-D-lactoyl-glutathione to form glutathione and D-lactic acid. The protein is Hydroxyacylglutathione hydrolase of Pasteurella multocida (strain Pm70).